The following is a 368-amino-acid chain: Peptide chain release factor 2 (368 aa).

Q250 bears the N5-methylglutamine mark.

The protein belongs to the prokaryotic/mitochondrial release factor family. In terms of processing, methylated by PrmC. Methylation increases the termination efficiency of RF2.

Its subcellular location is the cytoplasm. Peptide chain release factor 2 directs the termination of translation in response to the peptide chain termination codons UGA and UAA. The protein is Peptide chain release factor 2 of Chlamydia abortus (strain DSM 27085 / S26/3) (Chlamydophila abortus).